Reading from the N-terminus, the 365-residue chain is MKEMGVIVLLLLHSFFYVAFCFNDGLLPNGDFELGPRHSDMKGTQVINITAIPNWELSGFVEYIPSGHKQGDMILVVPKGAFAVRLGNEASIKQKISVKKGSYYSITFSAARTCAQDERLNVSVAPHHAVMPIQTVYSSSGWDLYSWAFKAQSDYADIVIHNPGVEEDPACGPLIDGVAMRALFPPRPTNKNILKNGGFEEGPWVLPNISSGVLIPPNSIDDHSPLPGWMVESLKAVKYIDSDHFSVPQGRRAVELVAGKESAVAQVVRTIPGKTYVLSFSVGDASNACAGSMIVEAFAGKDTIKVPYESKGKGGFKRSSLRFVAVSSRTRVMFYSTFYAMRNDDFSSLCGPVIDDVKLLSARRP.

The first 21 residues, 1-21, serve as a signal peptide directing secretion; that stretch reads MKEMGVIVLLLLHSFFYVAFC. N-linked (GlcNAc...) asparagine glycans are attached at residues Asn48, Asn121, and Asn208.

In terms of assembly, interacts with PME3. Mainly expressed in vascular tissues of roots, leaves, stamens and petals.

It is found in the secreted. The protein localises to the cell wall. Functionally, together with At5g11420, acts as a positive regulator of PME3 activity during several developmental processes, including reproductive organ development, hypocotyls elongation, seed germination and endosperm (testa) rupture at the micropyle, probably by modulating the pectin methylation status in cell walls. Involved in the regulation of pectin methylation degree to modulate cell wall physiology during cell separation, hypocotyl growth and embryo development. Required during embryo development, especially to regulate homogalacturonans (HG) methyl esterification in endosperm cell walls, a process related to embryo bending. Also implicated in hypocotyl growth and gravitropic response via the regulation of auxin efflux. Also regulates cell wall pectin upon root-knot nematode Meloidogyne incognita infection. In Arabidopsis thaliana (Mouse-ear cress), this protein is Protein BIIDXI.